The sequence spans 276 residues: MPELPEVETVRRTLQAKLPGLKITGVEVLLPKVIRSPELSEFKETIADKKILKVGRRGKYLLINLSEGYTLAVHLRMTGRLVYCAGQDPPARHTHVIFNLSNGCQLHFADMRQFGRIWLVPTDALDGLKGIKELGVEPLEELFTREFLKKELRRRHARIKPLLLDQTFIAGLGNIYADEALHRARINPERLATTLTPREIARLYRAIRDLLQEGIENRGTTVRDFIDGNGQAGNYQEFLQVYNREGKPCPRCGDKIAKKKVGGRSSYYCPTCQKVK.

Pro2 serves as the catalytic Schiff-base intermediate with DNA. The Proton donor role is filled by Glu3. Lys59 (proton donor; for beta-elimination activity) is an active-site residue. Positions 93, 112, and 155 each coordinate DNA. Residues 240-274 (QVYNREGKPCPRCGDKIAKKKVGGRSSYYCPTCQK) form an FPG-type zinc finger. Arg264 acts as the Proton donor; for delta-elimination activity in catalysis.

It belongs to the FPG family. As to quaternary structure, monomer. The cofactor is Zn(2+).

It catalyses the reaction Hydrolysis of DNA containing ring-opened 7-methylguanine residues, releasing 2,6-diamino-4-hydroxy-5-(N-methyl)formamidopyrimidine.. It carries out the reaction 2'-deoxyribonucleotide-(2'-deoxyribose 5'-phosphate)-2'-deoxyribonucleotide-DNA = a 3'-end 2'-deoxyribonucleotide-(2,3-dehydro-2,3-deoxyribose 5'-phosphate)-DNA + a 5'-end 5'-phospho-2'-deoxyribonucleoside-DNA + H(+). Involved in base excision repair of DNA damaged by oxidation or by mutagenic agents. Acts as a DNA glycosylase that recognizes and removes damaged bases. Has a preference for oxidized purines, such as 7,8-dihydro-8-oxoguanine (8-oxoG). Has AP (apurinic/apyrimidinic) lyase activity and introduces nicks in the DNA strand. Cleaves the DNA backbone by beta-delta elimination to generate a single-strand break at the site of the removed base with both 3'- and 5'-phosphates. The sequence is that of Formamidopyrimidine-DNA glycosylase from Pelotomaculum thermopropionicum (strain DSM 13744 / JCM 10971 / SI).